The sequence spans 151 residues: NADPH-dependent 7-cyano-7-deazaguanine reductase (151 aa).

Cysteine 51 (thioimide intermediate) is an active-site residue. Aspartate 58 serves as the catalytic Proton donor. Substrate is bound by residues 73 to 75 (VES) and 92 to 93 (HE).

This sequence belongs to the GTP cyclohydrolase I family. QueF type 1 subfamily.

The protein localises to the cytoplasm. The enzyme catalyses 7-aminomethyl-7-carbaguanine + 2 NADP(+) = 7-cyano-7-deazaguanine + 2 NADPH + 3 H(+). It participates in tRNA modification; tRNA-queuosine biosynthesis. Its function is as follows. Catalyzes the NADPH-dependent reduction of 7-cyano-7-deazaguanine (preQ0) to 7-aminomethyl-7-deazaguanine (preQ1). The protein is NADPH-dependent 7-cyano-7-deazaguanine reductase of Bacteroides thetaiotaomicron (strain ATCC 29148 / DSM 2079 / JCM 5827 / CCUG 10774 / NCTC 10582 / VPI-5482 / E50).